The chain runs to 55 residues: Conotoxin Cal14.14 (55 aa).

Positions Met-1–Ser-20 are cleaved as a signal peptide. 2 disulfides stabilise this stretch: Cys-34–Cys-48 and Cys-38–Cys-52.

As to expression, expressed by the venom duct.

Its subcellular location is the secreted. Functionally, probable neurotoxin. The sequence is that of Conotoxin Cal14.14 from Californiconus californicus (California cone).